A 304-amino-acid polypeptide reads, in one-letter code: Quinolinate synthase (304 aa).

Iminosuccinate contacts are provided by H23 and S40. C85 serves as a coordination point for [4Fe-4S] cluster. Residues 111-113 (YVN) and S128 contribute to the iminosuccinate site. C171 provides a ligand contact to [4Fe-4S] cluster. Iminosuccinate-binding positions include 197-199 (HPE) and T214. [4Fe-4S] cluster is bound at residue C259.

This sequence belongs to the quinolinate synthase family. Type 2 subfamily. The cofactor is [4Fe-4S] cluster.

The protein localises to the cytoplasm. The enzyme catalyses iminosuccinate + dihydroxyacetone phosphate = quinolinate + phosphate + 2 H2O + H(+). It participates in cofactor biosynthesis; NAD(+) biosynthesis; quinolinate from iminoaspartate: step 1/1. In terms of biological role, catalyzes the condensation of iminoaspartate with dihydroxyacetone phosphate to form quinolinate. In Pelobacter propionicus (strain DSM 2379 / NBRC 103807 / OttBd1), this protein is Quinolinate synthase.